A 516-amino-acid polypeptide reads, in one-letter code: GPI mannosyltransferase 4 (516 aa).

Topologically, residues 1-5 (MMRYQ) are lumenal. The chain crosses the membrane as a helical span at residues 6-26 (WWLYLVYAIGLMLCLGPSYIH). The Cytoplasmic segment spans residues 27 to 60 (PDEHFQCIEILAMQFMKVKGTIPWEFKSKFAARS). The chain crosses the membrane as a helical span at residues 61 to 81 (YGPLLLVYGPLFTILESFPEI). At 82 to 175 (QDNPALILYS…IQRSNFKNSV (94 aa)) the chain is on the lumenal side. Residues 176-196 (ILGLIFSFGVFNRVTFPAFIF) form a helical membrane-spanning segment. Topologically, residues 197-210 (LPCLILFWKFYRVH) are cytoplasmic. A helical transmembrane segment spans residues 211–231 (WKSFSLLLLSFSFSSCLFVLI). The Lumenal segment spans residues 232-270 (DTNIYNNGKGFVITPLNNLKYNLNVQNLQVHGLHPRYTH). Residues 271–291 (LLVNLPQIVGPVLLLAIFSGY) traverse the membrane as a helical segment. Topologically, residues 292-295 (KLDK) are cytoplasmic. The helical transmembrane segment at 296–316 (LSTYAIISGLLFLSFFQHQEL) threads the bilayer. Residue Arg-317 is a topological domain, lumenal. A helical membrane pass occupies residues 318 to 338 (FLVPLVPLLVTNLNWTPLSST). Topologically, residues 339 to 348 (LVNKKIFKGT) are cytoplasmic. The helical transmembrane segment at 349 to 369 (WLLFNIIMAFIMGISHQAGII) threads the bilayer. At 370 to 516 (QFLGDYFHFR…GLTVYSIELL (147 aa)) the chain is on the lumenal side. 2 N-linked (GlcNAc...) asparagine glycosylation sites follow: Asn-403 and Asn-452.

Belongs to the glycosyltransferase 22 family. PIGZ subfamily.

The protein localises to the endoplasmic reticulum membrane. It participates in glycolipid biosynthesis; glycosylphosphatidylinositol-anchor biosynthesis. Alpha-1,2-mannosyltransferase involved in glycosylphosphatidylinositol-anchor biosynthesis. Transfers a fourth mannose to trimannosyl-GPIs during GPI precursor assembly. The presence of a fourth mannose in GPI is essential in fungi. Involved in plasmid maintenance with SMP2. The polypeptide is GPI mannosyltransferase 4 (SMP3) (Saccharomyces cerevisiae (strain ATCC 204508 / S288c) (Baker's yeast)).